Consider the following 566-residue polypeptide: Urease subunit alpha (566 aa).

The region spanning 128 to 566 is the Urease domain; that stretch reads GGVDTHIHFI…LPMAQRYFLF (439 aa). The Ni(2+) site is built by His-133, His-135, and Lys-216. An N6-carboxylysine modification is found at Lys-216. His-218 is a substrate binding site. Positions 245 and 271 each coordinate Ni(2+). Catalysis depends on His-319, which acts as the Proton donor. Asp-359 provides a ligand contact to Ni(2+).

This sequence belongs to the metallo-dependent hydrolases superfamily. Urease alpha subunit family. As to quaternary structure, may form a heterohexamer of 3 UreC (alpha) and 3 UreAB (gamma/beta) subunits. May also form a heterotrimer of UreA (gamma), UreB (beta) and UreC (alpha) subunits. Three heterotrimers associate to form the active enzyme. Ni cation is required as a cofactor. In terms of processing, carboxylation allows a single lysine to coordinate two nickel ions.

It is found in the cytoplasm. The catalysed reaction is urea + 2 H2O + H(+) = hydrogencarbonate + 2 NH4(+). It functions in the pathway nitrogen metabolism; urea degradation; CO(2) and NH(3) from urea (urease route): step 1/1. The sequence is that of Urease subunit alpha from Pseudomonas savastanoi pv. phaseolicola (strain 1448A / Race 6) (Pseudomonas syringae pv. phaseolicola (strain 1448A / Race 6)).